Consider the following 61-residue polypeptide: Photosystem II reaction center X protein (61 aa).

Residues 26–46 (IGSFIAAALLIVIPATAFLIF) traverse the membrane as a helical segment.

It belongs to the PsbX family. Type 2 subfamily. PSII consists of a core antenna complex that captures photons, and an electron transfer chain that converts photonic excitation into a charge separation. PSII forms dimeric complexes.

The protein localises to the cellular thylakoid membrane. In terms of biological role, involved in the binding and/or turnover of quinones at the Q(B) site of Photosystem II. The polypeptide is Photosystem II reaction center X protein (Prochlorococcus marinus (strain MIT 9215)).